The following is a 406-amino-acid chain: Purine nucleoside permease (406 aa).

The first 22 residues, 1–22, serve as a signal peptide directing secretion; the sequence is MKLSTLFTLATTISTLTTFTIA.

It belongs to the NUP family.

Its activity is regulated as follows. Mammalian nucleoside transport inhibitors dipyridamole and NBMPR inhibit adenosine transport by NUP. Its function is as follows. Nucleoside permease that transports adenosine and guanosine. Does not show any transport activities towards cytidine, adenine, guanine, uridine, and uracil. This chain is Purine nucleoside permease, found in Candida albicans (Yeast).